We begin with the raw amino-acid sequence, 333 residues long: UPF0285 protein MTH_1441 (333 aa).

It belongs to the UPF0285 family.

This chain is UPF0285 protein MTH_1441, found in Methanothermobacter thermautotrophicus (strain ATCC 29096 / DSM 1053 / JCM 10044 / NBRC 100330 / Delta H) (Methanobacterium thermoautotrophicum).